The chain runs to 414 residues: 5-aminolevulinate synthase (414 aa).

Substrate contacts are provided by Arg22, Ser133, and Lys152. Pyridoxal 5'-phosphate-binding residues include Ser185, His213, and Thr241. Lys244 is an active-site residue. Residue Lys244 is modified to N6-(pyridoxal phosphate)lysine. Thr273 and Thr274 together coordinate pyridoxal 5'-phosphate. Substrate is bound at residue Thr359.

This sequence belongs to the class-II pyridoxal-phosphate-dependent aminotransferase family. In terms of assembly, homodimer. It depends on pyridoxal 5'-phosphate as a cofactor.

It carries out the reaction succinyl-CoA + glycine + H(+) = 5-aminolevulinate + CO2 + CoA. It functions in the pathway porphyrin-containing compound metabolism; protoporphyrin-IX biosynthesis; 5-aminolevulinate from glycine: step 1/1. This is 5-aminolevulinate synthase (hemA) from Rickettsia conorii (strain ATCC VR-613 / Malish 7).